The chain runs to 681 residues: UvrABC system protein B (681 aa).

The Helicase ATP-binding domain maps to Gln30–Pro419. Gly43–Thr50 lines the ATP pocket. The Beta-hairpin signature appears at Tyr96 to Ile119. The region spanning Gln435–Leu601 is the Helicase C-terminal domain. The 36-residue stretch at Tyr641–Val676 folds into the UVR domain.

Belongs to the UvrB family. Forms a heterotetramer with UvrA during the search for lesions. Interacts with UvrC in an incision complex.

It localises to the cytoplasm. In terms of biological role, the UvrABC repair system catalyzes the recognition and processing of DNA lesions. A damage recognition complex composed of 2 UvrA and 2 UvrB subunits scans DNA for abnormalities. Upon binding of the UvrA(2)B(2) complex to a putative damaged site, the DNA wraps around one UvrB monomer. DNA wrap is dependent on ATP binding by UvrB and probably causes local melting of the DNA helix, facilitating insertion of UvrB beta-hairpin between the DNA strands. Then UvrB probes one DNA strand for the presence of a lesion. If a lesion is found the UvrA subunits dissociate and the UvrB-DNA preincision complex is formed. This complex is subsequently bound by UvrC and the second UvrB is released. If no lesion is found, the DNA wraps around the other UvrB subunit that will check the other stand for damage. This Chlorobium chlorochromatii (strain CaD3) protein is UvrABC system protein B.